Here is a 227-residue protein sequence, read N- to C-terminus: Deoxyribose-phosphate aldolase (227 aa).

Residue Asp-96 is the Proton donor/acceptor of the active site. Lys-158 functions as the Schiff-base intermediate with acetaldehyde in the catalytic mechanism. The active-site Proton donor/acceptor is the Lys-187.

This sequence belongs to the DeoC/FbaB aldolase family. DeoC type 1 subfamily.

Its subcellular location is the cytoplasm. The catalysed reaction is 2-deoxy-D-ribose 5-phosphate = D-glyceraldehyde 3-phosphate + acetaldehyde. It participates in carbohydrate degradation; 2-deoxy-D-ribose 1-phosphate degradation; D-glyceraldehyde 3-phosphate and acetaldehyde from 2-deoxy-alpha-D-ribose 1-phosphate: step 2/2. Catalyzes a reversible aldol reaction between acetaldehyde and D-glyceraldehyde 3-phosphate to generate 2-deoxy-D-ribose 5-phosphate. The protein is Deoxyribose-phosphate aldolase of Desulfotalea psychrophila (strain LSv54 / DSM 12343).